The chain runs to 216 residues: Protein Syd (216 aa).

This sequence belongs to the Syd family.

It is found in the cell inner membrane. In terms of biological role, interacts with the SecY protein in vivo. May bind preferentially to an uncomplexed state of SecY, thus functioning either as a chelating agent for excess SecY in the cell or as a regulatory factor that negatively controls the translocase function. The polypeptide is Protein Syd (Shewanella sp. (strain W3-18-1)).